Here is a 525-residue protein sequence, read N- to C-terminus: Serine/threonine protein phosphatase 2A 55 kDa regulatory subunit B beta isoform (525 aa).

Residues 1 to 31 (MDPFSKSPDDDDLRPEAEAARRPQPQPQPRE) form a disordered region. WD repeat units follow at residues 48–87 (QEVDIISAIEFDKSGDHLATGDRGGRVVLFERTDSRDSAS) and 124–165 (EIEE…VKRI). Positions 169-191 (NLNTSQSSGNGTTSSSSSSSSRA) are disordered. Low complexity predominate over residues 171–189 (NTSQSSGNGTTSSSSSSSS). WD repeat units lie at residues 244 to 282 (AHDYHINSISNNSDGETYISADDLRINLWNLEISNQSFN), 293 to 333 (DLTE…LCDN), 352 to 390 (EIIASVSDIKFARDGRHILSRDYMTLKLWDINMDSGPVA), and 495 to 525 (DLSTKLLHLAWHPTENSIACAAANSLYMYYA).

Belongs to the phosphatase 2A regulatory subunit B family. As to quaternary structure, PP2A consists of a common heteromeric enzyme, composed of a catalytic subunit (subunits C), a constant regulatory subunit (subunit A), and a variety of regulatory subunits such as subunits B (the R2/B/PR55/B55, R3/B''/PR72/PR130/PR59 and R5/B'/B56 families).

In terms of biological role, the B regulatory subunit may modulate substrate selectivity and catalytic activity, and may also direct the localization of the catalytic enzyme to a particular subcellular compartment. The sequence is that of Serine/threonine protein phosphatase 2A 55 kDa regulatory subunit B beta isoform from Oryza sativa subsp. indica (Rice).